Consider the following 282-residue polypeptide: Bis(5'-nucleosyl)-tetraphosphatase, symmetrical (282 aa).

It belongs to the Ap4A hydrolase family.

The enzyme catalyses P(1),P(4)-bis(5'-adenosyl) tetraphosphate + H2O = 2 ADP + 2 H(+). Its function is as follows. Hydrolyzes diadenosine 5',5'''-P1,P4-tetraphosphate to yield ADP. This Escherichia coli O81 (strain ED1a) protein is Bis(5'-nucleosyl)-tetraphosphatase, symmetrical.